Reading from the N-terminus, the 353-residue chain is Fe(3+) ions import ATP-binding protein FbpC (353 aa).

In terms of domain architecture, ABC transporter spans 9-239; it reads VTFENVTKKF…PASAFIADFM (231 aa). An ATP-binding site is contributed by 41–48; the sequence is GPSGCGKT.

This sequence belongs to the ABC transporter superfamily. Fe(3+) ion importer (TC 3.A.1.10) family. The complex is composed of two ATP-binding proteins (FbpC), two transmembrane proteins (FbpB) and a solute-binding protein (FbpA).

It is found in the cell inner membrane. It carries out the reaction Fe(3+)(out) + ATP + H2O = Fe(3+)(in) + ADP + phosphate + H(+). In terms of biological role, part of the ABC transporter complex FbpABC involved in Fe(3+) ions import. Responsible for energy coupling to the transport system. The polypeptide is Fe(3+) ions import ATP-binding protein FbpC (Brucella suis biovar 1 (strain 1330)).